The sequence spans 121 residues: uncharacterized protein (121 aa).

The segment at 20 to 98 (NEVRTSQSEV…PYYHGSKAST (79 aa)) is disordered. Over residues 35 to 51 (KKSDNGEKDEKEEKELN) the composition is skewed to basic and acidic residues.

This is an uncharacterized protein from Invertebrate iridescent virus 6 (IIV-6).